We begin with the raw amino-acid sequence, 255 residues long: Leucyl/phenylalanyl-tRNA--protein transferase (255 aa).

The protein belongs to the L/F-transferase family.

Its subcellular location is the cytoplasm. It catalyses the reaction N-terminal L-lysyl-[protein] + L-leucyl-tRNA(Leu) = N-terminal L-leucyl-L-lysyl-[protein] + tRNA(Leu) + H(+). The enzyme catalyses N-terminal L-arginyl-[protein] + L-leucyl-tRNA(Leu) = N-terminal L-leucyl-L-arginyl-[protein] + tRNA(Leu) + H(+). It carries out the reaction L-phenylalanyl-tRNA(Phe) + an N-terminal L-alpha-aminoacyl-[protein] = an N-terminal L-phenylalanyl-L-alpha-aminoacyl-[protein] + tRNA(Phe). Functions in the N-end rule pathway of protein degradation where it conjugates Leu, Phe and, less efficiently, Met from aminoacyl-tRNAs to the N-termini of proteins containing an N-terminal arginine or lysine. The protein is Leucyl/phenylalanyl-tRNA--protein transferase of Burkholderia pseudomallei (strain 1106a).